A 2731-amino-acid polypeptide reads, in one-letter code: Putative mediator of RNA polymerase II transcription subunit 12 (2731 aa).

Coiled coils occupy residues Gln5–Gln37, His75–His108, Gln141–Gln189, and Ile275–Gln304. 2 disordered regions span residues Gln29 to His57 and Gln101 to Gln145. Positions Gln310 to Pro320 are enriched in low complexity. Disordered stretches follow at residues Gln310–Ser376, Thr432–Pro451, Leu685–Gln708, and Arg1251–Ser1341. Residues Gln327 to Ile337 show a composition bias toward polar residues. Positions Lys347–Gly361 are enriched in basic and acidic residues. Basic residues predominate over residues Gly688–Ser701. A compositionally biased stretch (low complexity) spans Arg1251–Asn1268. Acidic residues-rich tracts occupy residues Asn1275–Glu1298 and Asn1305–Met1326. Coiled coils occupy residues Glu1316–Asn1344 and Lys1375–Leu1433. 6 disordered regions span residues His1778 to Gly1825, Thr1892 to Thr1958, Ser2212 to Lys2258, Thr2307 to Gln2351, Glu2472 to Thr2532, and His2705 to Lys2731. 9 stretches are compositionally biased toward low complexity: residues Glu1783–Asn1824, Thr1892–Thr1909, Asn1916–Thr1958, Ser2212–Gln2250, Thr2307–Ser2322, Gln2337–Gln2351, Glu2472–Leu2501, Leu2508–Thr2532, and His2705–Gln2720. The stretch at Thr2239 to Ser2270 forms a coiled coil. Residues Leu2336–Gln2363 adopt a coiled-coil conformation. A coiled-coil region spans residues Gln2523–Leu2662. Residues Lys2721–Lys2731 are compositionally biased toward polar residues.

The protein belongs to the Mediator complex subunit 12 family. As to quaternary structure, component of the Mediator complex.

The protein resides in the nucleus. Component of the Mediator complex, a coactivator involved in the regulated transcription of nearly all RNA polymerase II-dependent genes. Mediator functions as a bridge to convey information from gene-specific regulatory proteins to the basal RNA polymerase II transcription machinery. Mediator is recruited to promoters by direct interactions with regulatory proteins and serves as a scaffold for the assembly of a functional preinitiation complex with RNA polymerase II and the general transcription factors. The protein is Putative mediator of RNA polymerase II transcription subunit 12 (med12) of Dictyostelium discoideum (Social amoeba).